We begin with the raw amino-acid sequence, 493 residues long: Angiopoietin-related protein 2 (493 aa).

A signal peptide spans 1–22; sequence MRPLCVTCWWLGLLAAMGAVAG. Coiled-coil stretches lie at residues 76–115 and 152–206; these read PEVL…VDGG and ALEL…HCQR. Asparagine 164 and asparagine 192 each carry an N-linked (GlcNAc...) asparagine glycan. One can recognise a Fibrinogen C-terminal domain in the interval 269-489; the sequence is DKPSGPWRDC…KVVMMIRPNP (221 aa). 2 cysteine pairs are disulfide-bonded: cysteine 278–cysteine 307 and cysteine 430–cysteine 443.

In terms of processing, N-glycosylated. As to expression, widely expressed in heart, small intestine, spleen and stomach. Also found in lower levels in colon, ovary, adrenal gland, skeletal muscle and in prostate.

Its subcellular location is the secreted. In terms of biological role, induces sprouting in endothelial cells through an autocrine and paracrine action. The polypeptide is Angiopoietin-related protein 2 (ANGPTL2) (Homo sapiens (Human)).